A 645-amino-acid polypeptide reads, in one-letter code: Glucans biosynthesis glucosyltransferase H (645 aa).

The segment covering 1-13 (MDGTVTPSPTTTA) has biased composition (polar residues). A disordered region spans residues 1–32 (MDGTVTPSPTTTAMPPVSALDAGTPTLPPEAP). 7 helical membrane-spanning segments follow: residues 64-84 (LIGGTFATTAIAVWVMLSVLW), 98-118 (LFVLLFAWIAMSFASAVAGFV), 423-443 (APMWGLLMLIGIGIPLAGGGI), 465-485 (AIWIFICTMFVLLAPKLLGYI), 504-524 (AVSILLETVLAALMAPVVMYL), 559-579 (YGGLTVFGLFMGAVAYAVSPA), and 580-600 (LAAWMGPVIVGMALSIPVVAL).

This sequence belongs to the glycosyltransferase 2 family. OpgH subfamily.

The protein localises to the cell inner membrane. It functions in the pathway glycan metabolism; osmoregulated periplasmic glucan (OPG) biosynthesis. Its function is as follows. Involved in the biosynthesis of osmoregulated periplasmic glucans (OPGs). This Xanthomonas euvesicatoria pv. vesicatoria (strain 85-10) (Xanthomonas campestris pv. vesicatoria) protein is Glucans biosynthesis glucosyltransferase H.